A 102-amino-acid polypeptide reads, in one-letter code: Large ribosomal subunit protein bL21 (102 aa).

Residues 79–91 (RKDSKRKKGHRQP) show a composition bias toward basic residues. Residues 79 to 102 (RKDSKRKKGHRQPYTKLTIDKINA) are disordered.

The protein belongs to the bacterial ribosomal protein bL21 family. As to quaternary structure, part of the 50S ribosomal subunit. Contacts protein L20.

This protein binds to 23S rRNA in the presence of protein L20. The protein is Large ribosomal subunit protein bL21 of Staphylococcus saprophyticus subsp. saprophyticus (strain ATCC 15305 / DSM 20229 / NCIMB 8711 / NCTC 7292 / S-41).